Reading from the N-terminus, the 101-residue chain is Small ribosomal subunit protein uS17 (101 aa).

Belongs to the universal ribosomal protein uS17 family. As to quaternary structure, part of the 30S ribosomal subunit.

In terms of biological role, one of the primary rRNA binding proteins, it binds specifically to the 5'-end of 16S ribosomal RNA. In Koribacter versatilis (strain Ellin345), this protein is Small ribosomal subunit protein uS17.